We begin with the raw amino-acid sequence, 1207 residues long: Putative coatomer subunit alpha (1207 aa).

8 WD repeats span residues 9-50 (SRSS…DRFD), 51-90 (GHDGPVRGIAFHPTQPLFVSGGDDYKVNVWNYKSRKLLFS), 93-134 (GHMD…AILT), 135-174 (GHSHYVMCAAFHPSEDLIVSASLDQTVRVWDISGLRMKNA), 210-249 (GHDRGVNWCAFHPTLPLILSAGDDRLVKLWRMTASKAWEV), 254-293 (GHFNNVSCCLFHPHQELILSASEDKTIRVWDLNRRTAVQT), 296-336 (RDND…HALN), and 370-411 (SAWL…NSLP). Phosphoserine is present on residues S409 and S942.

Oligomeric complex that consists of at least the alpha, beta, beta', gamma, delta, epsilon and zeta subunits.

It is found in the cytoplasm. Its subcellular location is the golgi apparatus membrane. Functionally, the coatomer is a cytosolic protein complex that binds to dilysine motifs and reversibly associates with Golgi non-clathrin-coated vesicles, which further mediate biosynthetic protein transport from the ER, via the Golgi up to the trans Golgi network. Coatomer complex is required for budding from Golgi membranes, and is essential for the retrograde Golgi-to-ER transport of dilysine-tagged proteins. The sequence is that of Putative coatomer subunit alpha from Schizosaccharomyces pombe (strain 972 / ATCC 24843) (Fission yeast).